The chain runs to 620 residues: Probable serine/threonine-protein kinase RTK1 (620 aa).

5 disordered regions span residues 1–20 (MVKETPLHSSSSTSLSSLFR), 29–130 (AKIF…PVRT), 153–186 (KDAFHHPHPVRSTAHSNISTVSSAKSDTPSSNLS), 210–237 (QASTPGSVELQHNSSSGSDDTSSRKKKS), and 252–271 (HDNHHHHHHHNRGSTPTKPK). Positions 7 to 18 (LHSSSSTSLSSL) are enriched in low complexity. A compositionally biased stretch (basic and acidic residues) spans 56-76 (KNTDSDQEDQIKYNKPNDRRS). A Phosphothreonine modification is found at Thr-58. A Phosphoserine modification is found at Ser-60. Polar residues-rich tracts occupy residues 95–107 (VASSTLTGISPTS), 165–186 (TAHSNISTVSSAKSDTPSSNLS), and 210–222 (QASTPGSVELQHN). A Phosphoserine modification is found at Ser-216. Positions 254 to 263 (NHHHHHHHNR) are enriched in basic residues. A Protein kinase domain is found at 302–575 (GIPGRKLGEG…MNDVVKDDWL (274 aa)). Residues 308 to 316 (LGEGASGSV) and Lys-330 contribute to the ATP site. Lys-334 is covalently cross-linked (Glycyl lysine isopeptide (Lys-Gly) (interchain with G-Cter in ubiquitin)). Asp-430 (proton acceptor) is an active-site residue.

This sequence belongs to the protein kinase superfamily. Ser/Thr protein kinase family. Interacts with ribosome biogenesis factors ARC1, CKA2 and GUS1.

The enzyme catalyses L-seryl-[protein] + ATP = O-phospho-L-seryl-[protein] + ADP + H(+). The catalysed reaction is L-threonyl-[protein] + ATP = O-phospho-L-threonyl-[protein] + ADP + H(+). In terms of biological role, probable serine/threonine-protein kinase that may be involved in ribosome biogenesis. The chain is Probable serine/threonine-protein kinase RTK1 (RTK1) from Saccharomyces cerevisiae (strain ATCC 204508 / S288c) (Baker's yeast).